The sequence spans 1121 residues: Anillin (1121 aa).

Residue Met1 is modified to N-acetylmethionine. A compositionally biased stretch (basic and acidic residues) spans Met1–Glu25. Residues Met1–Ser45 are required for ubiquitination. Disordered stretches follow at residues Met1 to Ser113, Ala125 to Arg196, and Asp212 to Ile402. The segment at Met1 to His154 is interaction with CD2AP. Residues Met1–Pro228 form a nuclear localization region. Residues Ser73 and Ser96 each carry the phosphoserine modification. Pro residues predominate over residues Ser96–Pro109. A compositionally biased stretch (polar residues) spans Asn130–Thr143. Residues Arg147 to Ser157 show a composition bias toward basic and acidic residues. Ser180 carries the phosphoserine modification. The residue at position 192 (Thr192) is a Phosphothreonine. Polar residues predominate over residues His216 to Pro228. A phosphoserine mark is found at Ser223, Ser250, and Ser259. The tract at residues Gly229–Tyr671 is interaction with F-actin. The segment covering Ser234–Ser250 has biased composition (low complexity). The segment covering Ser282–Ala298 has biased composition (low complexity). The segment covering Glu303–His314 has biased composition (basic and acidic residues). Residue Thr316 is modified to Phosphothreonine. Ser318 and Ser334 each carry phosphoserine. Position 359 is a phosphothreonine (Thr359). N6-acetyllysine is present on Lys366. A compositionally biased stretch (basic and acidic residues) spans Phe368–Pro384. Residues Lys391–Ala401 show a composition bias toward polar residues. Thr392 and Thr396 each carry phosphothreonine. 2 positions are modified to phosphoserine: Ser414 and Ser444. A disordered region spans residues Asn490–Lys511. Residues Leu496 to Lys511 show a composition bias toward polar residues. A phosphoserine mark is found at Ser513, Ser548, and Ser556. A coiled-coil region spans residues Phe564 to Ile599. The segment covering Ser623–Ala635 has biased composition (polar residues). Residues Ser623–Ser656 are disordered. Ser637, Ser653, Ser656, and Ser659 each carry phosphoserine. Tyr666 is modified (phosphotyrosine). Ser673, Ser683, Ser787, and Ser924 each carry phosphoserine. Positions Gln725 to Pro1121 are localization to the cleavage furrow. One can recognise a PH domain in the interval Ala980–Val1104.

In terms of assembly, interacts with F-actin. Interacts with CD2AP. May interact with RHOA. Interacts with FZR1/CDH1 during mitotic exit. In terms of processing, phosphorylated during mitosis. Post-translationally, ubiquitinated, and this requires FZR1/CDH1.

The protein resides in the nucleus. It is found in the cytoplasm. Its subcellular location is the cytoskeleton. It localises to the cell cortex. The protein localises to the cell projection. The protein resides in the bleb. Functionally, required for cytokinesis. Essential for the structural integrity of the cleavage furrow and for completion of cleavage furrow ingression. Plays a role in bleb assembly during metaphase and anaphase of mitosis. May play a significant role in podocyte cell migration. The polypeptide is Anillin (Anln) (Mus musculus (Mouse)).